Here is a 297-residue protein sequence, read N- to C-terminus: Molybdate/tungstate import ATP-binding protein WtpC (297 aa).

The region spanning 2–226 (LKVNNLSKIW…PKNKKVAEFL (225 aa)) is the ABC transporter domain. Residue 32 to 39 (GPSGAGKS) participates in ATP binding.

It belongs to the ABC transporter superfamily. Sulfate/tungstate importer (TC 3.A.1.6) family. In terms of assembly, the complex is composed of two ATP-binding proteins (WtpC), two transmembrane proteins (WtpB) and a solute-binding protein (WtpA).

Its subcellular location is the cell membrane. The enzyme catalyses tungstate(in) + ATP + H2O = tungstate(out) + ADP + phosphate + H(+). Part of the ABC transporter complex WtpABC involved in molybdate/tungstate import. Responsible for energy coupling to the transport system. This is Molybdate/tungstate import ATP-binding protein WtpC (wtpC) from Methanocaldococcus jannaschii (strain ATCC 43067 / DSM 2661 / JAL-1 / JCM 10045 / NBRC 100440) (Methanococcus jannaschii).